The following is a 334-amino-acid chain: Ornithine carbamoyltransferase subunit I (334 aa).

Residues 56-59 (STRT), Gln-83, Arg-107, and 134-137 (HPTQ) contribute to the carbamoyl phosphate site. Residues Asn-168, Asp-232, and 236-237 (SM) contribute to the L-ornithine site. Cys-274 is a binding site for Zn(2+). Carbamoyl phosphate contacts are provided by residues 274 to 275 (CL) and Arg-320.

Belongs to the aspartate/ornithine carbamoyltransferase superfamily. OTCase family. As to quaternary structure, in E.coli strain K12, trimer of identical or non-identical chains are composed of ArgI (I) and/or ArgF (F). The trimer has the following composition: FFI, FFF, FII, III. E.coli strains B and W, which are known to contain only ArgI, produce only a trimer of identical chains (III).

It is found in the cytoplasm. It catalyses the reaction carbamoyl phosphate + L-ornithine = L-citrulline + phosphate + H(+). It functions in the pathway amino-acid biosynthesis; L-arginine biosynthesis; L-arginine from L-ornithine and carbamoyl phosphate: step 1/3. Its activity is regulated as follows. Reversely inhibited by N-(N-Sulfodiaminophosphinyl)-L-ornithine. Zinc is an allosteric regulator of the substrate-bound enzyme and a competitive inhibitor of the free enzyme. Its function is as follows. Reversibly catalyzes the transfer of the carbamoyl group from carbamoyl phosphate (CP) to the N(epsilon) atom of ornithine (ORN) to produce L-citrulline, which is a substrate for argininosuccinate synthetase, the enzyme involved in the final step in arginine biosynthesis. This Escherichia coli (strain K12) protein is Ornithine carbamoyltransferase subunit I.